A 365-amino-acid chain; its full sequence is 3-dehydroquinate synthase (365 aa).

NAD(+) contacts are provided by residues 106-110, 130-131, Lys142, Lys151, and 169-172; these read GVIGD, TT, and FFAT. Glu184, His247, and His264 together coordinate Zn(2+).

It belongs to the sugar phosphate cyclases superfamily. Dehydroquinate synthase family. It depends on Co(2+) as a cofactor. Zn(2+) serves as cofactor. NAD(+) is required as a cofactor.

The protein localises to the cytoplasm. It carries out the reaction 7-phospho-2-dehydro-3-deoxy-D-arabino-heptonate = 3-dehydroquinate + phosphate. The protein operates within metabolic intermediate biosynthesis; chorismate biosynthesis; chorismate from D-erythrose 4-phosphate and phosphoenolpyruvate: step 2/7. Functionally, catalyzes the conversion of 3-deoxy-D-arabino-heptulosonate 7-phosphate (DAHP) to dehydroquinate (DHQ). The polypeptide is 3-dehydroquinate synthase (Listeria monocytogenes serotype 4b (strain CLIP80459)).